The primary structure comprises 478 residues: 2,5-dioxopentanoate dehydrogenase (478 aa).

NADP(+) is bound by residues 148-149, 172-175, and 225-226; these read WN, KPAT, and GS. The Proton acceptor role is filled by Glu249. Cys283 functions as the Nucleophile in the catalytic mechanism. An NADP(+)-binding site is contributed by Glu379.

This sequence belongs to the aldehyde dehydrogenase family. As to quaternary structure, homotetramer.

It carries out the reaction 2,5-dioxopentanoate + NADP(+) + H2O = 2-oxoglutarate + NADPH + 2 H(+). Functionally, 2,5-dioxopentanoate dehydrogenase involved in the degradation of pentoses such as D-arabinose or D-xylose, a major component of hemicelluloses such as xylan. Catalyzes the fifth reaction in the pentose utilization pathway through dehydratation of 2,5-dioxopentanoate into 2-oxoglutarate. Also shows dehydrogenase activity toward glycolaldehyde and DL-glyceraldehyde. This is 2,5-dioxopentanoate dehydrogenase from Saccharolobus solfataricus (strain ATCC 35092 / DSM 1617 / JCM 11322 / P2) (Sulfolobus solfataricus).